We begin with the raw amino-acid sequence, 534 residues long: Glucomannan 4-beta-mannosyltransferase 2 (534 aa).

The helical transmembrane segment at 36 to 56 (VIVPLLQLAVYICLLMSVMLL) threads the bilayer. The active site involves D136. D195 and D197 together coordinate substrate. D289 is an active-site residue. Transmembrane regions (helical) follow at residues 368–388 (IIAHWVTFCFYCVVLPLTILV), 404–426 (IITILNSVGTPRSIHLLFYWILF), 483–503 (LNTLELGFAAFLFVCGCYDFV), and 509–529 (YFIYLFLQTMSFFISGLGWIG).

It belongs to the glycosyltransferase 2 family. Plant cellulose synthase-like A subfamily.

It localises to the golgi apparatus membrane. It carries out the reaction GDP-mannose + (glucomannan)n = GDP + (glucomannan)n+1.. In terms of biological role, possesses glucomannan synthase and mannan synthase activities in vitro. Mannan synthase consists of a 4-beta-mannosyltransferase activity on mannan using GDP-mannose. The beta-1,4-mannan product is the backbone for galactomannan synthesis by galactomannan galactosyltransferase. Galactomannan is a noncellulosic polysaccharides of plant cell wall. This is Glucomannan 4-beta-mannosyltransferase 2 from Arabidopsis thaliana (Mouse-ear cress).